Consider the following 1020-residue polypeptide: Phosphatidylinositol 3-kinase VPS34 (1020 aa).

The region spanning 49–210 is the C2 PI3K-type domain; that stretch reads LSTKFEDPTV…NWLDKMVLPK (162 aa). The PIK helical domain occupies 331-577; that stretch reads DKELKPTPQL…DGPIKIYMDI (247 aa). The 339-residue stretch at 666–1004 folds into the PI3K/PI4K catalytic domain; the sequence is YPEESSVFKS…LINDSVNAFL (339 aa). The segment at 672 to 678 is G-loop; it reads VFKSSLA. A catalytic loop region spans residues 873-881; it reads GVGDRHLDN. An activation loop region spans residues 892–913; that stretch reads HADFGYILGRDPKPFPPLMKLP.

Belongs to the PI3/PI4-kinase family. As to quaternary structure, component of the autophagy-specific VPS34 PI3-kinase complex I composed of at least VPS15, VPS30, VPS34, and of the VPS34 PI3-kinase complex II composed of VPS15, VPS30, VPS34 and VPS38. Interacts with VMNA7. Post-translationally, autophosphorylated.

It localises to the golgi apparatus. The protein localises to the trans-Golgi network membrane. It is found in the endosome membrane. The enzyme catalyses a 1,2-diacyl-sn-glycero-3-phospho-(1D-myo-inositol) + ATP = a 1,2-diacyl-sn-glycero-3-phospho-(1D-myo-inositol-3-phosphate) + ADP + H(+). Multifunctional phosphatidylinositol 3-kinase involved in acidification of vacuoles, pH-dependent cell growth, and autophagocytosis. Plays an important role in protein transport and virulence. Component of the autophagy-specific VPS34 PI3-kinase complex I essential to recruit the ATG8-phosphatidylinositol conjugate and the ATG12-ATG5 conjugate to the pre-autophagosomal structure. Also involved in endosome-to-Golgi retrograde transport as part of the VPS34 PI3-kinase complex II. This second complex is required for the endosome-to-Golgi retrieval of PEP1 and KEX2, and the recruitment of VPS5 and VPS7, two components of the retromer complex, to endosomal membranes (probably through the synthesis of a specific pool of phosphatidylinositol 3-phosphate recruiting the retromer to the endosomes). Finally, it might also be involved in ethanol tolerance and cell wall integrity. This is Phosphatidylinositol 3-kinase VPS34 from Candida albicans (Yeast).